We begin with the raw amino-acid sequence, 113 residues long: Prefoldin subunit beta (113 aa).

Belongs to the prefoldin subunit beta family. As to quaternary structure, heterohexamer of two alpha and four beta subunits.

Its subcellular location is the cytoplasm. Functionally, molecular chaperone capable of stabilizing a range of proteins. Seems to fulfill an ATP-independent, HSP70-like function in archaeal de novo protein folding. This is Prefoldin subunit beta (pfdB) from Methanocaldococcus jannaschii (strain ATCC 43067 / DSM 2661 / JAL-1 / JCM 10045 / NBRC 100440) (Methanococcus jannaschii).